Consider the following 453-residue polypeptide: Protein IVY1 (453 aa).

Residues 1 to 16 (MPDNNTEQLQGSPSSD) show a composition bias toward polar residues. The interval 1–20 (MPDNNTEQLQGSPSSDQRLR) is disordered. Phosphoserine occurs at positions 59, 84, and 85. Coiled coils occupy residues 102-122 (KRDV…SNAY) and 230-257 (IRNL…KHDF). Disordered stretches follow at residues 316–340 (DGPY…EETG) and 353–453 (TSQP…SSNI). Phosphoserine is present on Ser335. A compositionally biased stretch (low complexity) spans 353–371 (TSQPSTSKTSLPKSKGSST). Composition is skewed to polar residues over residues 372-384 (VSTP…SSNK) and 404-429 (LMGT…TFKQ). Residues 431-442 (SIKEDNDNHSSD) show a composition bias toward basic and acidic residues. The span at 443-453 (TDGMQDQSSNI) shows a compositional bias: polar residues.

In terms of assembly, homomultimer. Interacts with YPT7 and VPS33.

It localises to the vacuole membrane. Its function is as follows. May be required for vacuolar fusion. Overexpression leads to fragmentation of vacuoles, missorting of the vacuolar enzyme carboxypeptidase Y (CPY) to the exterior of the cell and accumulation of multivesicular bodies inside the cell. This chain is Protein IVY1 (IVY1), found in Saccharomyces cerevisiae (strain ATCC 204508 / S288c) (Baker's yeast).